Consider the following 869-residue polypeptide: MRVLSAIALVASLASSALSAPASESRVSTQLRSRDAEGYSSPPYYPAPNGGWLSSWADAYEKAQRVVRDMTLAEKVNLTTGTGIFMGPCVGQTGSALRFGIPNLCLQDSPLGVRNSDHNTAFPAGITVGATFDKDLMYARGVELGKEFRGKGINVLLGPSVGPIGRKPRGGRNWEGFGADPSLQAIGGAQTIKGIQSQGVIATIKHYIGNEQEMYRMSNVGQRAYSSNIDDRTLHEVYLWPFAEGIRAGVGAVMTAYNEVNSSACSQNSKLLNEILKDELGFQGFVMTDWLGQYGGVSSALAGLDMAMPGDGAIPLLGTAYWGSELSRSILNGSVPVSRLNDMVTRIVAAWYKMGQDGDFPLPNFSSNTQDATGPLYPGALFSPSGVVNQYVNVQADHNITARAIARDAITLLKNDDNILPLKKDDALKVFGTDAGPNPDGLNSCADMGCNKGVLTMGWGSGTSRLPYLVTPQEAIANISSNAAFFITDKFPSNVAVSSGDVAVVFISADSGENYITVEGNPGDRTSAGLNAWHNGDKLVKDAAAKFSKVVVVVHTVGPILMEEWIDLPSVKAVLVAHLPGQEAGWSLTDVLFGDYSPSGHLPYTIPRAESDYPSSVGLLSQPIVQIQDTYTEGLYIDYRHFLKANITPRYPFGHGLSYTTFSFSQPTLSVRTALDSTYPPTRPPKGPTPTYPTAIPDPSEVAWPKNFDRIWRYLYPYLDDPASAAKNSSKTYPYPAGYTTVPKPAPRAGGAEGGNPALFDVAFAVSVTVTNTGSRPGRAVAQLYVELPDSLGETPSRQLRQFAKTKTLAPGTSETLTMEITRKDISVWDVVVQDWKAPVRGEGVKIWLGESVLDMRAVCEVGGACRVI.

Residues 1 to 19 form the signal peptide; it reads MRVLSAIALVASLASSALS. N-linked (GlcNAc...) asparagine glycosylation is found at N77 and N261. The active site involves D289. Residues N332, N364, N399, and N478 are each glycosylated (N-linked (GlcNAc...) asparagine). The segment at 677 to 697 is disordered; sequence STYPPTRPPKGPTPTYPTAIP. The span at 681-691 shows a compositional bias: pro residues; the sequence is PTRPPKGPTPT. N-linked (GlcNAc...) asparagine glycosylation is present at N728.

This sequence belongs to the glycosyl hydrolase 3 family.

The protein localises to the secreted. It carries out the reaction Hydrolysis of terminal, non-reducing beta-D-glucosyl residues with release of beta-D-glucose.. Its pathway is glycan metabolism; cellulose degradation. Beta-glucosidases are one of a number of cellulolytic enzymes involved in the degradation of cellulosic biomass. Catalyzes the last step releasing glucose from the inhibitory cellobiose. The sequence is that of Probable beta-glucosidase F (bglF) from Aspergillus fumigatus (strain CBS 144.89 / FGSC A1163 / CEA10) (Neosartorya fumigata).